Here is a 37-residue protein sequence, read N- to C-terminus: Large ribosomal subunit protein bL36 (37 aa).

The protein belongs to the bacterial ribosomal protein bL36 family.

The chain is Large ribosomal subunit protein bL36 from Sulfurimonas denitrificans (strain ATCC 33889 / DSM 1251) (Thiomicrospira denitrificans (strain ATCC 33889 / DSM 1251)).